The sequence spans 934 residues: 2-oxoglutarate dehydrogenase E1 component (934 aa).

Residues 515-537 (RAAQDKIDKSDKMDNPDMERPES) are compositionally biased toward basic and acidic residues. Positions 515–544 (RAAQDKIDKSDKMDNPDMERPESLQEPLQS) are disordered.

It belongs to the alpha-ketoglutarate dehydrogenase family. Homodimer. Part of the 2-oxoglutarate dehydrogenase (OGDH) complex composed of E1 (2-oxoglutarate dehydrogenase), E2 (dihydrolipoamide succinyltransferase) and E3 (dihydrolipoamide dehydrogenase); the complex contains multiple copies of the three enzymatic components (E1, E2 and E3). It depends on thiamine diphosphate as a cofactor.

The enzyme catalyses N(6)-[(R)-lipoyl]-L-lysyl-[protein] + 2-oxoglutarate + H(+) = N(6)-[(R)-S(8)-succinyldihydrolipoyl]-L-lysyl-[protein] + CO2. Functionally, E1 component of the 2-oxoglutarate dehydrogenase (OGDH) complex which catalyzes the decarboxylation of 2-oxoglutarate, the first step in the conversion of 2-oxoglutarate to succinyl-CoA and CO(2). This chain is 2-oxoglutarate dehydrogenase E1 component, found in Staphylococcus haemolyticus (strain JCSC1435).